Consider the following 370-residue polypeptide: Peptidyl-prolyl cis-trans isomerase D (370 aa).

At S5 the chain carries Phosphoserine. The PPIase cyclophilin-type domain occupies 19–183; sequence FFDVDIGGER…KLCVIAECGE (165 aa). K171 is subject to N6-acetyllysine. The tract at residues 185-215 is chaperone activity; that stretch reads KEGDDWGIFPKDGSGDSHPDFPEDADVDLKD. At S198 the chain carries Phosphoserine. Residues 214-370 form an interaction with HSP90AB1 region; that stretch reads KDVDKILLIS…EKAAYAKMFA (157 aa). TPR repeat units follow at residues 223 to 256, 273 to 306, and 307 to 340; these read SEDL…VEGS, LSCV…DPSN, and TKAL…APED.

The protein belongs to the cyclophilin-type PPIase family. PPIase D subfamily. In terms of assembly, identified in ESR1 or NR3C1/GCR steroid receptor-chaperone complexes. Found in HSP90 chaperone complexes with kinase clients LCK or EIF2AK1. Two monomers associate with one HSP90 homodimer. Interacts with HSP90AA1. Interacts with HSP90AB1; PPID and FKBP4 compete for binding to HSP90AB1 and the interaction is mutually exclusive with the PPID:HSPA8 interaction. Interacts with HSPA8; PPID and STIP1 but not FKBP4 compete for binding to HSPA8 and the interaction is mutually exclusive with the PPID:HSP90AB1 interaction. Interacts with S100A1 and S100A2; the interactions dissociate the PPID:HSP90AA1 interaction. Interacts with S100A6. Interacts with MYB, ILF2, XRCC6, RACK1 and RPS3. Interacts with cytoplasmic dynein 1 intermediate chain (DYNC1I1 or DYNC1I2). In terms of processing, the N-terminus is blocked. In terms of tissue distribution, detected in heart, thymis and brain.

The protein localises to the cytoplasm. Its subcellular location is the nucleus. It is found in the nucleolus. It localises to the nucleoplasm. The enzyme catalyses [protein]-peptidylproline (omega=180) = [protein]-peptidylproline (omega=0). Less sensitive to inhibition by cyclosporin A than is CYP-18. PPIase that catalyzes the cis-trans isomerization of proline imidic peptide bonds in oligopeptides and may therefore assist protein folding. Proposed to act as a co-chaperone in HSP90 complexes such as in unligated steroid receptors heterocomplexes. Different co-chaperones seem to compete for association with HSP90 thus establishing distinct HSP90-co-chaperone-receptor complexes with the potential to exert tissue-specific receptor activity control. May have a preference for estrogen receptor complexes and is not found in glucocorticoid receptor complexes. May be involved in cytoplasmic dynein-dependent movement of the receptor from the cytoplasm to the nucleus. May regulate MYB by inhibiting its DNA-binding activity. Involved in regulation of AHR signaling by promoting the formation of the AHR:ARNT dimer; the function is independent of HSP90 but requires the chaperone activity. Involved in regulation of UV radiation-induced apoptosis. This chain is Peptidyl-prolyl cis-trans isomerase D, found in Bos taurus (Bovine).